The following is a 983-amino-acid chain: 26S proteasome regulatory subunit RPN1 (983 aa).

Residues 1 to 26 show a composition bias toward basic and acidic residues; the sequence is MSTDKKKEEVPKPETEDLTVKDETKN. 2 disordered regions span residues 1–44 and 169–188; these read MSTD…EDQK and VEKEAEDNSTSTESSPQPPH. 5 PC repeats span residues 415 to 447, 448 to 484, 485 to 519, 520 to 557, and 563 to 595; these read SAVASIGSIYQWNIDGLQQLDKYLYVDEPEVKA, GGLLGIGIASAGVHHDVEPALLLLQEYINHSDTKIST, AAILGIGIAFAGSKNDEVLGLLLPVVSNTENSLEL, AAIAALALSHVFVGTCNGDITTAVMDNFLERTPLELKS, and LALSLGLLYLGQGEHVDDVLETINAIEHPMTSA. Disordered stretches follow at residues 625–644 and 662–724; these read AVKSSDEDEDEDNEELSQED and EPQG…GAND. The span at 630–642 shows a compositional bias: acidic residues; that stretch reads DEDEDEDNEELSQ. Residues 688–705 are compositionally biased toward basic and acidic residues; it reads NVKKEENEEEKTEKSEKT. The span at 706 to 718 shows a compositional bias: acidic residues; the sequence is ENDEEEEDEEESK. PC repeat units lie at residues 768–799 and 800–834; these read LAMGLVSVADPQMKVFDTLTRFSHDPDLDVSM and NSIFAMGLCGVGTNNARLAQLLRQLASYYSREQDA.

This sequence belongs to the proteasome subunit S2 family.

Functionally, acts as a regulatory subunit of the 26 proteasome which is involved in the ATP-dependent degradation of ubiquitinated proteins. In Candida glabrata (strain ATCC 2001 / BCRC 20586 / JCM 3761 / NBRC 0622 / NRRL Y-65 / CBS 138) (Yeast), this protein is 26S proteasome regulatory subunit RPN1 (RPN1).